The primary structure comprises 198 residues: Glutamyl-tRNA(Gln) amidotransferase subunit C, mitochondrial (198 aa).

It belongs to the GatC family. In terms of assembly, subunit of the heterotrimeric GatCAB amidotransferase (AdT) complex, composed of A, B and C subunits.

The protein localises to the mitochondrion. It carries out the reaction L-glutamyl-tRNA(Gln) + L-glutamine + ATP + H2O = L-glutaminyl-tRNA(Gln) + L-glutamate + ADP + phosphate + H(+). Functionally, allows the formation of correctly charged Gln-tRNA(Gln) through the transamidation of misacylated Glu-tRNA(Gln) in the mitochondria. The reaction takes place in the presence of glutamine and ATP through an activated gamma-phospho-Glu-tRNA(Gln). The sequence is that of Glutamyl-tRNA(Gln) amidotransferase subunit C, mitochondrial from Caenorhabditis remanei (Caenorhabditis vulgaris).